A 142-amino-acid polypeptide reads, in one-letter code: uncharacterized protein (142 aa).

The region spanning 2–142 (IHMKQLTSKE…IESYLFRKPV (141 aa)) is the N-acetyltransferase domain.

Belongs to the acetyltransferase family.

This is an uncharacterized protein from Bacillus subtilis (strain 168).